Here is a 281-residue protein sequence, read N- to C-terminus: Cytosolic Fe-S cluster assembly factor CFD1 (281 aa).

Residue Gly24–Ser31 coordinates ATP. Residues Cys201 and Cys204 each contribute to the [4Fe-4S] cluster site.

The protein belongs to the Mrp/NBP35 ATP-binding proteins family. NUBP2/CFD1 subfamily. In terms of assembly, heterotetramer of 2 NBP35 and 2 CFD1 chains. [4Fe-4S] cluster is required as a cofactor.

The protein resides in the cytoplasm. In terms of biological role, component of the cytosolic iron-sulfur (Fe/S) protein assembly (CIA) machinery. Required for maturation of extramitochondrial Fe-S proteins. The NBP35-CFD1 heterotetramer forms a Fe-S scaffold complex, mediating the de novo assembly of an Fe-S cluster and its transfer to target apoproteins. Required for biogenesis and export of both ribosomal subunits, which may reflect a role in assembly of the Fe/S clusters in RLI1, a protein which performs rRNA processing and ribosome export. This is Cytosolic Fe-S cluster assembly factor CFD1 from Eremothecium gossypii (strain ATCC 10895 / CBS 109.51 / FGSC 9923 / NRRL Y-1056) (Yeast).